The chain runs to 633 residues: Chaperone protein DnaK (633 aa).

Threonine 198 carries the phosphothreonine; by autocatalysis modification.

It belongs to the heat shock protein 70 family.

In terms of biological role, acts as a chaperone. In Rhodopseudomonas palustris (strain BisA53), this protein is Chaperone protein DnaK.